The primary structure comprises 167 residues: Beta-3 adrenergic receptor (167 aa).

Residues 1 to 25 (RVGADAEAQECHSNPRCCSFASNMP) lie on the Extracellular side of the membrane. Cysteines 11 and 17 form a disulfide. Residues 26-47 (YALLSSSVSFYLPLLVMLFVYA) form a helical membrane-spanning segment. The Cytoplasmic segment spans residues 48 to 114 (RVFVVAKRQR…LPLREHRALR (67 aa)). The interval 66–97 (RFPPEESPRSPSRSPSPVAGGTGEAPDGVPSC) is disordered. Residues 115 to 136 (TLGLIMGIFSLCWLPFFLANVL) form a helical membrane-spanning segment. Residues 137–148 (RALAGPSIVPNG) lie on the Extracellular side of the membrane. A helical membrane pass occupies residues 149-167 (VFIALNWLGYANSAFNPLI).

It belongs to the G-protein coupled receptor 1 family. Adrenergic receptor subfamily. ADRB3 sub-subfamily. Interacts with ARRDC3.

The protein localises to the cell membrane. Functionally, beta-adrenergic receptors mediate the catecholamine-induced activation of adenylate cyclase through the action of G proteins. Beta-3 is involved in the regulation of lipolysis and thermogenesis. This is Beta-3 adrenergic receptor (ADRB3) from Meriones unguiculatus (Mongolian jird).